The sequence spans 192 residues: MKTFALILADGQASRMGGEDKGLALLGGKALIDHVIDRVRPQVSHIAISTNRNLEEYARRSPHIFPDARQWQHFGPLSALCTAANDLQLATADWLLVVPCDMPYLPGDLVARFETVSKRTPLCNAYYVETPITMHYNIMYIRPQILQSAIPYLFSGMKTLRSWLQQQRARPVRFEFDGHFADLNTQIDLQEG.

3 residues coordinate GTP: K21, D67, and D101. D101 contacts Mg(2+).

Belongs to the MobA family. Monomer. It depends on Mg(2+) as a cofactor.

The protein resides in the cytoplasm. It carries out the reaction Mo-molybdopterin + GTP + H(+) = Mo-molybdopterin guanine dinucleotide + diphosphate. Its function is as follows. Transfers a GMP moiety from GTP to Mo-molybdopterin (Mo-MPT) cofactor (Moco or molybdenum cofactor) to form Mo-molybdopterin guanine dinucleotide (Mo-MGD) cofactor. The polypeptide is Molybdenum cofactor guanylyltransferase (Neisseria meningitidis serogroup C / serotype 2a (strain ATCC 700532 / DSM 15464 / FAM18)).